The chain runs to 676 residues: Envelope glycoprotein (676 aa).

The signal sequence occupies residues 1 to 32; it reads MGVTGILQLPRDRFKRTSFFLWVIILFQRTFS. The Extracellular segment spans residues 33 to 650; it reads IPLGVIHNST…NDNWWTGWRQ (618 aa). Asparagine 40 carries an N-linked (GlcNAc...) asparagine; by host glycan. Intrachain disulfides connect cysteine 53-cysteine 609, cysteine 108-cysteine 135, cysteine 121-cysteine 147, cysteine 511-cysteine 556, and cysteine 601-cysteine 608. The interval 54–201 is receptor-binding; it reads RDKLSSTNQL…DFFSSHPLRE (148 aa). Asparagine 204, asparagine 228, asparagine 238, asparagine 257, asparagine 268, asparagine 296, asparagine 317, asparagine 333, asparagine 346, asparagine 386, and asparagine 413 each carry an N-linked (GlcNAc...) asparagine; by host glycan. The interval 305-485 is mucin-like region; the sequence is ELSFTVVSNG…SGKLGLITNT (181 aa). Residues 315 to 335 show a composition bias toward polar residues; sequence AKNISGQSPARTSSDPGTNTT. The interval 315–337 is disordered; sequence AKNISGQSPARTSSDPGTNTTTE. A compositionally biased stretch (polar residues) spans 373-391; it reads TSPQSLTTKPGPDNSTHNT. 2 disordered regions span residues 373–392 and 402–479; these read TSPQSLTTKPGPDNSTHNTP and TQVE…SGKL. Over residues 414–432 the composition is skewed to low complexity; it reads DSTASDTPSATTAAGPPKA. Residues 433–464 are compositionally biased toward polar residues; it reads ENTNTSKSTDFLDPATTTSPQNHSETAGNNNT. 3 N-linked (GlcNAc...) asparagine; by host glycosylation sites follow: asparagine 436, asparagine 454, and asparagine 462. The tract at residues 524–539 is fusion peptide; the sequence is GAAIGLAWIPYFGPAA. Residues 554–595 adopt a coiled-coil conformation; that stretch reads LICGLRQLANETTQALQLFLRATTELRTFSILNRKAIDFLLQ. Asparagine 563 carries an N-linked (GlcNAc...) asparagine; by host glycan. Positions 615-634 form a coiled coil; it reads WTKNITDKIDQIIHDFVDKT. Asparagine 618 carries an N-linked (GlcNAc...) asparagine; by host glycan. Residues 651 to 671 traverse the membrane as a helical segment; sequence WIPAGIGVTGVIIAVIALFCI. Residues cysteine 670 and cysteine 672 are each lipidated (S-palmitoyl cysteine; by host). At 672–676 the chain is on the cytoplasmic side; that stretch reads CKFVF.

The protein belongs to the filoviruses glycoprotein family. In terms of assembly, homotrimer; each monomer consists of a GP1 and a GP2 subunit linked by disulfide bonds. The resulting peplomers (GP1,2) protrude from the virus surface as spikes. Interacts with host integrin alpha-V/ITGAV. Interacts with host CLEC10A. Binds also to host CD209 and CLEC4M/DC-SIGN(R). Interacts with host FOLR1. Interacts with BST2; this interaction inhibits the antiviral effect of BST2 and this allows viral release from infected cells. Interacts with host FCN1; this interaction enhances viral entry. Interacts with host TLR4; this interaction induces cell death in T-lymphocytes or proinflammatory cytokines and SOCS1 production in monocytes. Interacts with host entry receptor NPC1. As to quaternary structure, GP1 and GP2delta are part of GP1,2delta soluble complexes released by ectodomain shedding. Post-translationally, the signal peptide region modulates GP's high mannose glycosylation, thereby determining the efficiency of the interactions with DC-SIGN(R). N-glycosylated. In terms of processing, O-glycosylated in the mucin-like region. Post-translationally, palmitoylation of GP2 is not required for its function. Specific enzymatic cleavages in vivo yield mature proteins. The precursor is processed into GP1 and GP2 by host cell furin in the trans Golgi, and maybe by other host proteases, to yield the mature GP1 and GP2 proteins. The cleavage site corresponds to the furin optimal cleavage sequence [KR]-X-[KR]-R. This cleavage does not seem to be required for function. After the internalization of the virus into cell endosomes, GP1 C-terminus is removed by the endosomal proteases cathepsin B, cathepsin L, or both, leaving a 19-kDa N-terminal fragment which is further digested by cathepsin B. Proteolytic processing of GP1,2 by host ADAM17 can remove the transmembrane anchor of GP2 and leads to shedding of complexes consisting in GP1 and truncated GP2 (GP1,2delta).

The protein localises to the virion membrane. Its subcellular location is the host cell membrane. It localises to the secreted. Functionally, trimeric GP1,2 complexes form the virion surface spikes and mediate the viral entry processes, with GP1 acting as the receptor-binding subunit and GP2 as the membrane fusion subunit. At later times of infection, down-regulates the expression of various host cell surface molecules that are essential for immune surveillance and cell adhesion. Down-modulates several integrins including ITGA1, ITGA2, ITGA3, ITGA4, ITGA5, ITGA6, ITGAV and ITGB1. This decrease in cell adhesion molecules may lead to cell detachment, contributing to the disruption of blood vessel integrity and hemorrhages developed during infection (cytotoxicity). Interacts with host TLR4 and thereby stimulates the differentiation and activation of monocytes leading to bystander death of T-lymphocytes. Down-regulates as well the function of host natural killer cells. Counteracts the antiviral effect of host BST2/tetherin that restricts release of progeny virions from infected cells. However, cooperates with VP40 and host BST2 to activate canonical NF-kappa-B pathway in a manner dependent on neddylation. In terms of biological role, functions as a decoy for anti-GP1,2 antibodies thereby contributing to viral immune evasion. Interacts and activates host macrophages and dendritic cells inducing up-regulation of cytokine transcription. This effect is mediated throught activation of host TLR4. Its function is as follows. Responsible for binding to the receptor(s) on target cells. Interacts with CD209/DC-SIGN and CLEC4M/DC-SIGNR which act as cofactors for virus entry into dendritic cells (DCs) and endothelial cells. Binding to the macrophage specific lectin CLEC10A also seems to enhance virus infectivity. Interaction with FOLR1/folate receptor alpha may be a cofactor for virus entry in some cell types, although results are contradictory. Members of the Tyro3 receptor tyrosine kinase family also seem to be cell entry factors in filovirus infection. Once attached, the virions are internalized through clathrin-dependent endocytosis and/or macropinocytosis. After internalization of the virus into the endosomes of the host cell, proteolysis of GP1 by two cysteine proteases, CTSB/cathepsin B and CTSL/cathepsin L removes the glycan cap and allows GP1 binding to the host entry receptor NPC1. NPC1-binding, Ca(2+) and acidic pH induce a conformational change of GP2, which unmasks its fusion peptide and permit membranes fusion. Acts as a class I viral fusion protein. Under the current model, the protein has at least 3 conformational states: pre-fusion native state, pre-hairpin intermediate state, and post-fusion hairpin state. During viral and target cell membrane fusion, the coiled coil regions (heptad repeats) assume a trimer-of-hairpins structure, positioning the fusion peptide in close proximity to the C-terminal region of the ectodomain. The formation of this structure appears to drive apposition and subsequent fusion of viral and target cell membranes. Responsible for penetration of the virus into the cell cytoplasm by mediating the fusion of the membrane of the endocytosed virus particle with the endosomal membrane. Low pH in endosomes induces an irreversible conformational change in GP2, releasing the fusion hydrophobic peptide. The polypeptide is Envelope glycoprotein (GP) (Epomops franqueti (Franquet's epauletted fruit bat)).